The primary structure comprises 1597 residues: Rho guanine nucleotide exchange factor 5 (1597 aa).

Disordered stretches follow at residues 138 to 246 (PFSS…EGTL), 258 to 455 (EEQM…SLEP), and 467 to 1072 (GSFL…VFRE). Position 184 is a phosphoserine (S184). The segment covering 192–204 (ETNQNEGSESGTI) has biased composition (polar residues). Positions 217 to 237 (ESQGLLHPQEVQVLEEQGQQE) are enriched in low complexity. The segment covering 266–278 (NDEKGEQKQKQEQ) has biased composition (basic and acidic residues). The segment covering 299–309 (GLNDGEWEQED) has biased composition (acidic residues). 2 stretches are compositionally biased toward basic and acidic residues: residues 323–368 (GEER…KEKG) and 394–404 (RSREEENEHHG). Polar residues predominate over residues 428 to 438 (LMTQIPGTQTE). S445 and S450 each carry phosphoserine. The segment covering 474 to 490 (SPDKEIDQNSQQEESRL) has biased composition (basic and acidic residues). Pro residues predominate over residues 512–522 (PRTPDSAPPSP). Composition is skewed to polar residues over residues 583–601 (STGTSPPRPPANSTGTVQH) and 655–682 (DYSTVSASPTALSTLKQDSQESISNLER). Basic and acidic residues predominate over residues 731-746 (QRRDTHPSVVETDGHA). Composition is skewed to pro residues over residues 812–828 (PLPPTPDLPQPHLPPIS) and 838–856 (PLPPLPIIDPPTEPPPLPP). R866 carries the post-translational modification Asymmetric dimethylarginine. Low complexity predominate over residues 901 to 920 (ATARSTESFTSTSRSKSEVS). Residues 926-941 (SNMTNFLCPSSPTTPW) are compositionally biased toward polar residues. A compositionally biased stretch (basic and acidic residues) spans 950 to 969 (SKDEAGVSEHPEAPAREPLR). A phosphoserine mark is found at S983, S1011, and S1044. Basic and acidic residues predominate over residues 990 to 1012 (QPEKPSHLHLEKASSWPHRRDSG). Residues 1057-1072 (AVEKHPGPSDTVVFRE) are compositionally biased toward basic and acidic residues. At S1126 the chain carries Phosphoserine. Residues 1174 to 1358 (KLQEVKFELI…EQLIRDCNNN (185 aa)) form the DH domain. Residues 1390-1502 (WLVKSGELTA…WISALAMPRE (113 aa)) form the PH domain. One can recognise an SH3 domain in the interval 1510-1571 (YNSPQVQCLR…PVQQVEFISN (62 aa)).

As to quaternary structure, interacts with SRC. Forms a ternary complex with SRC and the PI3K 85 kDa subunit. Interacts with and is activated by the heterodimer formed by GNB1 and GNG2. Interacts with ODAM (via C-terminus). Interacts with RHOA. In terms of processing, activation of SRC induces tyrosine phosphorylation of ARHGEF5. Ubiquitously expressed with highest levels in placenta. High levels are also found in colon, kidney, trachea, prostate, liver, pancreas, pituitary gland, thyroid gland and mammary gland. In fetal tissues, expressed at high levels in kidney, lung and liver. Expressed at low levels in lung and heart.

It localises to the cytoplasm. Its subcellular location is the nucleus. It is found in the cell projection. The protein localises to the podosome. Guanine nucleotide exchange factor which activates Rho GTPases. Strongly activates RHOA. Also strongly activates RHOB, weakly activates RHOC and RHOG and shows no effect on RHOD, RHOV, RHOQ or RAC1. Involved in regulation of cell shape and actin cytoskeletal organization. Plays a role in actin organization by generating a loss of actin stress fibers and the formation of membrane ruffles and filopodia. Required for SRC-induced podosome formation. Involved in positive regulation of immature dendritic cell migration. This Homo sapiens (Human) protein is Rho guanine nucleotide exchange factor 5 (ARHGEF5).